The sequence spans 497 residues: Probable cytosol aminopeptidase (497 aa).

Residues Lys267 and Asp272 each contribute to the Mn(2+) site. Lys279 is a catalytic residue. Residues Asp290, Asp349, and Glu351 each contribute to the Mn(2+) site. The active site involves Arg353.

The protein belongs to the peptidase M17 family. Mn(2+) serves as cofactor.

The protein resides in the cytoplasm. The enzyme catalyses Release of an N-terminal amino acid, Xaa-|-Yaa-, in which Xaa is preferably Leu, but may be other amino acids including Pro although not Arg or Lys, and Yaa may be Pro. Amino acid amides and methyl esters are also readily hydrolyzed, but rates on arylamides are exceedingly low.. It carries out the reaction Release of an N-terminal amino acid, preferentially leucine, but not glutamic or aspartic acids.. Its function is as follows. Presumably involved in the processing and regular turnover of intracellular proteins. Catalyzes the removal of unsubstituted N-terminal amino acids from various peptides. This is Probable cytosol aminopeptidase from Pseudomonas putida (strain GB-1).